The chain runs to 338 residues: UPF0104 membrane protein MTH_1261 (338 aa).

8 consecutive transmembrane segments (helical) span residues 6 to 26 (AILI…IGPG), 36 to 56 (DPVY…LFTL), 124 to 144 (LDTF…VLYF), 149 to 169 (WILA…FLAL), 231 to 251 (ISFL…TAFG), 254 to 274 (ISLL…MIPL), 275 to 295 (LPGG…YAGV), and 310 to 330 (ISFW…GSSV).

It belongs to the UPF0104 family.

It is found in the cell membrane. The sequence is that of UPF0104 membrane protein MTH_1261 from Methanothermobacter thermautotrophicus (strain ATCC 29096 / DSM 1053 / JCM 10044 / NBRC 100330 / Delta H) (Methanobacterium thermoautotrophicum).